Here is a 224-residue protein sequence, read N- to C-terminus: Ribosomal RNA large subunit methyltransferase E (224 aa).

Residues glycine 64, tryptophan 66, aspartate 97, aspartate 113, and aspartate 138 each coordinate S-adenosyl-L-methionine. The Proton acceptor role is filled by lysine 178.

Belongs to the class I-like SAM-binding methyltransferase superfamily. RNA methyltransferase RlmE family.

It localises to the cytoplasm. It carries out the reaction uridine(2552) in 23S rRNA + S-adenosyl-L-methionine = 2'-O-methyluridine(2552) in 23S rRNA + S-adenosyl-L-homocysteine + H(+). Specifically methylates the uridine in position 2552 of 23S rRNA at the 2'-O position of the ribose in the fully assembled 50S ribosomal subunit. The sequence is that of Ribosomal RNA large subunit methyltransferase E from Albidiferax ferrireducens (strain ATCC BAA-621 / DSM 15236 / T118) (Rhodoferax ferrireducens).